Reading from the N-terminus, the 206-residue chain is Large ribosomal subunit protein uL4 (206 aa).

The segment at 45–76 (RQGNQSAKTRAEVSGGGKKPWRQKGTGRARQG) is disordered.

This sequence belongs to the universal ribosomal protein uL4 family. In terms of assembly, part of the 50S ribosomal subunit.

In terms of biological role, one of the primary rRNA binding proteins, this protein initially binds near the 5'-end of the 23S rRNA. It is important during the early stages of 50S assembly. It makes multiple contacts with different domains of the 23S rRNA in the assembled 50S subunit and ribosome. Its function is as follows. Forms part of the polypeptide exit tunnel. In Clostridium novyi (strain NT), this protein is Large ribosomal subunit protein uL4.